A 453-amino-acid polypeptide reads, in one-letter code: tRNA(Ile)-lysidine synthase (453 aa).

27–32 (SGGSDS) lines the ATP pocket.

Belongs to the tRNA(Ile)-lysidine synthase family.

Its subcellular location is the cytoplasm. It carries out the reaction cytidine(34) in tRNA(Ile2) + L-lysine + ATP = lysidine(34) in tRNA(Ile2) + AMP + diphosphate + H(+). Its function is as follows. Ligates lysine onto the cytidine present at position 34 of the AUA codon-specific tRNA(Ile) that contains the anticodon CAU, in an ATP-dependent manner. Cytidine is converted to lysidine, thus changing the amino acid specificity of the tRNA from methionine to isoleucine. In Rhizobium meliloti (strain 1021) (Ensifer meliloti), this protein is tRNA(Ile)-lysidine synthase.